The sequence spans 474 residues: 3-isopropylmalate dehydratase large subunit (474 aa).

Cysteine 353, cysteine 414, and cysteine 417 together coordinate [4Fe-4S] cluster.

This sequence belongs to the aconitase/IPM isomerase family. LeuC type 1 subfamily. As to quaternary structure, heterodimer of LeuC and LeuD. [4Fe-4S] cluster is required as a cofactor.

It catalyses the reaction (2R,3S)-3-isopropylmalate = (2S)-2-isopropylmalate. It functions in the pathway amino-acid biosynthesis; L-leucine biosynthesis; L-leucine from 3-methyl-2-oxobutanoate: step 2/4. Catalyzes the isomerization between 2-isopropylmalate and 3-isopropylmalate, via the formation of 2-isopropylmaleate. The protein is 3-isopropylmalate dehydratase large subunit of Xylella fastidiosa (strain 9a5c).